We begin with the raw amino-acid sequence, 137 residues long: Large ribosomal subunit protein uL16 (137 aa).

It belongs to the universal ribosomal protein uL16 family. Part of the 50S ribosomal subunit.

In terms of biological role, binds 23S rRNA and is also seen to make contacts with the A and possibly P site tRNAs. In Methylocella silvestris (strain DSM 15510 / CIP 108128 / LMG 27833 / NCIMB 13906 / BL2), this protein is Large ribosomal subunit protein uL16.